The sequence spans 124 residues: Fluoride-specific ion channel FluC 1 (124 aa).

A run of 4 helical transmembrane segments spans residues 1-21, 30-50, 56-76, and 102-122; these read MNWLLVIAGAMVGAPLRYVTD, AVFPWGTFAINVTGCLVLGLL, AGVASPHLELLLGTGLCGALT, and IASVAAGLGAAFAGVWFAQAL. Na(+) contacts are provided by Gly-73 and Thr-76.

The protein belongs to the fluoride channel Fluc/FEX (TC 1.A.43) family.

Its subcellular location is the cell membrane. It catalyses the reaction fluoride(in) = fluoride(out). Na(+) is not transported, but it plays an essential structural role and its presence is essential for fluoride channel function. In terms of biological role, fluoride-specific ion channel. Important for reducing fluoride concentration in the cell, thus reducing its toxicity. This chain is Fluoride-specific ion channel FluC 1, found in Streptomyces avermitilis (strain ATCC 31267 / DSM 46492 / JCM 5070 / NBRC 14893 / NCIMB 12804 / NRRL 8165 / MA-4680).